Here is a 214-residue protein sequence, read N- to C-terminus: Adenylate kinase (214 aa).

Residue 10–15 (GAGKGT) participates in ATP binding. Residues 30–59 (STGDMLRAAIKAGTELGLEAKRVMDEGKLV) are NMP. Residues T31, R36, 57–59 (KLV), 85–88 (GFPR), and Q92 each bind AMP. The tract at residues 122-159 (GRRVHPASGRVYHVVYNPPKVEGKDNETGDDLIVRDDD) is LID. ATP contacts are provided by residues R123 and 132 to 133 (VY). 2 residues coordinate AMP: R156 and R167. An ATP-binding site is contributed by R200.

It belongs to the adenylate kinase family. In terms of assembly, monomer.

The protein localises to the cytoplasm. The enzyme catalyses AMP + ATP = 2 ADP. Its pathway is purine metabolism; AMP biosynthesis via salvage pathway; AMP from ADP: step 1/1. Its function is as follows. Catalyzes the reversible transfer of the terminal phosphate group between ATP and AMP. Plays an important role in cellular energy homeostasis and in adenine nucleotide metabolism. The sequence is that of Adenylate kinase from Alteromonas mediterranea (strain DSM 17117 / CIP 110805 / LMG 28347 / Deep ecotype).